A 32-amino-acid polypeptide reads, in one-letter code: Photosystem II reaction center protein T (32 aa).

A helical membrane pass occupies residues 3–23; that stretch reads ALVYTFLLIGTLMVIFFAVFF.

It belongs to the PsbT family. As to quaternary structure, PSII is composed of 1 copy each of membrane proteins PsbA, PsbB, PsbC, PsbD, PsbE, PsbF, PsbH, PsbI, PsbJ, PsbK, PsbL, PsbM, PsbT, PsbX, PsbY, PsbZ, Psb30/Ycf12, at least 3 peripheral proteins of the oxygen-evolving complex and a large number of cofactors. It forms dimeric complexes.

It localises to the plastid. The protein localises to the chloroplast thylakoid membrane. Its function is as follows. Found at the monomer-monomer interface of the photosystem II (PS II) dimer, plays a role in assembly and dimerization of PSII. PSII is a light-driven water plastoquinone oxidoreductase, using light energy to abstract electrons from H(2)O, generating a proton gradient subsequently used for ATP formation. This Trieres chinensis (Marine centric diatom) protein is Photosystem II reaction center protein T.